The primary structure comprises 303 residues: 4-sulfomuconolactone hydrolase (303 aa).

The protein belongs to the metallo-dependent hydrolases superfamily. Sulfomuconolactone hydrolase family. As to quaternary structure, monomer. Zn(2+) is required as a cofactor.

The catalysed reaction is 4-sulfomuconolactone + H2O = maleylacetate + sulfite + 2 H(+). Its activity is regulated as follows. Completely inhibited by ZnCl(2) and CuCl(2). Involved in the degradation of 4-sulfocatechol which is a central intermediate in the degradation of substituted sulfonated benzenes. Catalyzes the hydrolytical desulfonation of 4-sulfomuconolactone to yield maleylacetate. In Hydrogenophaga intermedia, this protein is 4-sulfomuconolactone hydrolase.